Consider the following 187-residue polypeptide: Adenine phosphoribosyltransferase (187 aa).

Belongs to the purine/pyrimidine phosphoribosyltransferase family. Homodimer.

The protein resides in the cytoplasm. The catalysed reaction is AMP + diphosphate = 5-phospho-alpha-D-ribose 1-diphosphate + adenine. Its pathway is purine metabolism; AMP biosynthesis via salvage pathway; AMP from adenine: step 1/1. Catalyzes a salvage reaction resulting in the formation of AMP, that is energically less costly than de novo synthesis. The polypeptide is Adenine phosphoribosyltransferase (Yersinia enterocolitica serotype O:8 / biotype 1B (strain NCTC 13174 / 8081)).